Reading from the N-terminus, the 295-residue chain is Lectin 11 (295 aa).

Topologically, residues 1–22 (MHYSHFYFIINNTNMTINAIPK) are cytoplasmic. The helical transmembrane segment at 23 to 45 (LFATKNSISLSIVIFMYLLILVA) threads the bilayer. Over 46–295 (NVKSDSSFNF…ILSWSFTSNM (250 aa)) the chain is Extracellular. N-linked (GlcNAc...) asparagine glycosylation occurs at N152.

Belongs to the leguminous lectin family.

The protein resides in the membrane. Its function is as follows. May be involved in arbuscular mycorrhizal (AM) symbiosis with AM fungi. This is Lectin 11 from Medicago truncatula (Barrel medic).